The chain runs to 223 residues: Phosphoribosylformylglycinamidine synthase subunit PurQ (223 aa).

A Glutamine amidotransferase type-1 domain is found at 2-223 (KFAVIQFPGS…ASVLKNFVGK (222 aa)). Cys86 acts as the Nucleophile in catalysis. Residues His195 and Glu197 contribute to the active site.

In terms of assembly, part of the FGAM synthase complex composed of 1 PurL, 1 PurQ and 2 PurS subunits.

The protein resides in the cytoplasm. The catalysed reaction is N(2)-formyl-N(1)-(5-phospho-beta-D-ribosyl)glycinamide + L-glutamine + ATP + H2O = 2-formamido-N(1)-(5-O-phospho-beta-D-ribosyl)acetamidine + L-glutamate + ADP + phosphate + H(+). It catalyses the reaction L-glutamine + H2O = L-glutamate + NH4(+). The protein operates within purine metabolism; IMP biosynthesis via de novo pathway; 5-amino-1-(5-phospho-D-ribosyl)imidazole from N(2)-formyl-N(1)-(5-phospho-D-ribosyl)glycinamide: step 1/2. Its function is as follows. Part of the phosphoribosylformylglycinamidine synthase complex involved in the purines biosynthetic pathway. Catalyzes the ATP-dependent conversion of formylglycinamide ribonucleotide (FGAR) and glutamine to yield formylglycinamidine ribonucleotide (FGAM) and glutamate. The FGAM synthase complex is composed of three subunits. PurQ produces an ammonia molecule by converting glutamine to glutamate. PurL transfers the ammonia molecule to FGAR to form FGAM in an ATP-dependent manner. PurS interacts with PurQ and PurL and is thought to assist in the transfer of the ammonia molecule from PurQ to PurL. The sequence is that of Phosphoribosylformylglycinamidine synthase subunit PurQ from Lactococcus lactis subsp. lactis (strain IL1403) (Streptococcus lactis).